The sequence spans 175 residues: Ribosome-binding factor A (175 aa).

Residues 129 to 175 (GAKPAGEADPYRDRGSADEPSDAGGLVIRTSDGLEAENTGDDYQAED) are disordered. The span at 162-175 (LEAENTGDDYQAED) shows a compositional bias: acidic residues.

This sequence belongs to the RbfA family. Monomer. Binds 30S ribosomal subunits, but not 50S ribosomal subunits or 70S ribosomes.

It is found in the cytoplasm. Its function is as follows. One of several proteins that assist in the late maturation steps of the functional core of the 30S ribosomal subunit. Associates with free 30S ribosomal subunits (but not with 30S subunits that are part of 70S ribosomes or polysomes). Required for efficient processing of 16S rRNA. May interact with the 5'-terminal helix region of 16S rRNA. The chain is Ribosome-binding factor A from Mycobacterium marinum (strain ATCC BAA-535 / M).